The following is a 315-amino-acid chain: Ribosomal RNA small subunit methyltransferase H (315 aa).

Residues 33 to 35, Asp52, Phe84, Asp106, and Gln113 each bind S-adenosyl-L-methionine; that span reads GGH. Residues 294–315 are disordered; that stretch reads SSDELEENNRSHSAKLRVAEKL.

The protein belongs to the methyltransferase superfamily. RsmH family.

The protein resides in the cytoplasm. The enzyme catalyses cytidine(1402) in 16S rRNA + S-adenosyl-L-methionine = N(4)-methylcytidine(1402) in 16S rRNA + S-adenosyl-L-homocysteine + H(+). Functionally, specifically methylates the N4 position of cytidine in position 1402 (C1402) of 16S rRNA. The protein is Ribosomal RNA small subunit methyltransferase H of Lactobacillus johnsonii (strain CNCM I-12250 / La1 / NCC 533).